The chain runs to 163 residues: NAD(P)H-quinone oxidoreductase subunit I, chloroplastic (163 aa).

4Fe-4S ferredoxin-type domains lie at 55 to 84 (GRIH…VDWK) and 95 to 124 (LNYS…MTEE). [4Fe-4S] cluster contacts are provided by Cys-64, Cys-67, Cys-70, Cys-74, Cys-104, Cys-107, Cys-110, and Cys-114.

Belongs to the complex I 23 kDa subunit family. As to quaternary structure, NDH is composed of at least 16 different subunits, 5 of which are encoded in the nucleus. Requires [4Fe-4S] cluster as cofactor.

It localises to the plastid. The protein localises to the chloroplast thylakoid membrane. The enzyme catalyses a plastoquinone + NADH + (n+1) H(+)(in) = a plastoquinol + NAD(+) + n H(+)(out). It carries out the reaction a plastoquinone + NADPH + (n+1) H(+)(in) = a plastoquinol + NADP(+) + n H(+)(out). Functionally, NDH shuttles electrons from NAD(P)H:plastoquinone, via FMN and iron-sulfur (Fe-S) centers, to quinones in the photosynthetic chain and possibly in a chloroplast respiratory chain. The immediate electron acceptor for the enzyme in this species is believed to be plastoquinone. Couples the redox reaction to proton translocation, and thus conserves the redox energy in a proton gradient. In Glycine max (Soybean), this protein is NAD(P)H-quinone oxidoreductase subunit I, chloroplastic.